The chain runs to 757 residues: Protein Lines homolog 1 (757 aa).

A Phosphoserine modification is found at S635.

Belongs to the protein lines family. In terms of tissue distribution, expressed in adult testis, prostate, prostate, spleen, thymus, skeletal muscle, fetal kidney and brain.

This Homo sapiens (Human) protein is Protein Lines homolog 1.